A 529-amino-acid chain; its full sequence is Peptide chain release factor 3 (529 aa).

One can recognise a tr-type G domain in the interval 11 to 280 (SKRRTFAIIS…SLIKWAPSPI (270 aa)). Residues 20 to 27 (SHPDAGKT), 88 to 92 (DTPGH), and 142 to 145 (NKLD) contribute to the GTP site.

It belongs to the TRAFAC class translation factor GTPase superfamily. Classic translation factor GTPase family. PrfC subfamily.

It is found in the cytoplasm. Its function is as follows. Increases the formation of ribosomal termination complexes and stimulates activities of RF-1 and RF-2. It binds guanine nucleotides and has strong preference for UGA stop codons. It may interact directly with the ribosome. The stimulation of RF-1 and RF-2 is significantly reduced by GTP and GDP, but not by GMP. This chain is Peptide chain release factor 3, found in Buchnera aphidicola subsp. Schizaphis graminum (strain Sg).